The following is a 365-amino-acid chain: P2Y purinoceptor 4 (365 aa).

The Extracellular portion of the chain corresponds to 1–34; it reads MASTESSLLRSLGLSPGPGSSEVELDCWFDEDFK. The helical transmembrane segment at 35–61 threads the bilayer; the sequence is FILLPVSYAVVFVLGLGLNAPTLWLFI. Residues 62 to 72 lie on the Cytoplasmic side of the membrane; sequence FRLRPWDATAT. Residues 73 to 95 traverse the membrane as a helical segment; the sequence is YMFHLALSDTLYVLSLPTLIYYY. The Extracellular portion of the chain corresponds to 96–112; sequence AAHNHWPFGTEICKFVR. A disulfide bond links C108 and C185. Residues 113-131 form a helical membrane-spanning segment; it reads FLFYWNLYCSVLFLTCISV. Topologically, residues 132–154 are cytoplasmic; the sequence is HRYLGICHPLRALRWGRPRLAGL. A helical membrane pass occupies residues 155–174; the sequence is LCLAVWLVVAGCLVPNLFFV. The Extracellular portion of the chain corresponds to 175–196; the sequence is TTSNKGTTVLCHDTTRPEEFDH. The helical transmembrane segment at 197–222 threads the bilayer; that stretch reads YVHFSSAVMGLLFGVPCLVTLVCYGL. Residues 223-246 lie on the Cytoplasmic side of the membrane; that stretch reads MARRLYQPLPGSAQSSSRLRSLRT. Residues 247 to 269 form a helical membrane-spanning segment; that stretch reads IAVVLTVFAVCFVPFHITRTIYY. Topologically, residues 270-287 are extracellular; that stretch reads LARLLEADCRVLNIVNVV. A helical transmembrane segment spans residues 288 to 309; the sequence is YKVTRPLASANSCLDPVLYLLT. Topologically, residues 310–365 are cytoplasmic; the sequence is GDKYRRQLRQLCGGGKPQPRTAASSLALVSLPEDSSCRWAATPQDSSCSTPRADRL. Phosphoserine is present on residues S333 and S334.

This sequence belongs to the G-protein coupled receptor 1 family. Post-translationally, phosphorylation of Ser-333 and Ser-334 is a key step in agonist-dependent desensitization and loss of surface P2RY4. This phosphorylation does not involve PKC, nor other calcium activated kinases. As to expression, pancreas.

It localises to the cell membrane. Receptor for UTP and UDP coupled to G-proteins that activate a phosphatidylinositol-calcium second messenger system. Not activated by ATP or ADP. The polypeptide is P2Y purinoceptor 4 (P2RY4) (Homo sapiens (Human)).